We begin with the raw amino-acid sequence, 110 residues long: MSINKILSAADITKALGEFKGADSFDHKKFFHMIGLKKKNAKDVEAVFYILDKDKSGFIEEDELKSVLKCFAPEGRDLSEKETKDLLTAGDEDGDGKIGVSEFIQLVANS.

EF-hand domains follow at residues 39 to 74 and 78 to 110; these read KNAK…FAPE and LSEK…VANS. Residues aspartate 52, aspartate 54, serine 56, phenylalanine 58, glutamate 60, glutamate 63, aspartate 91, aspartate 93, aspartate 95, lysine 97, and glutamate 102 each coordinate Ca(2+).

It belongs to the parvalbumin family.

Functionally, in muscle, parvalbumin is thought to be involved in relaxation after contraction. It binds two calcium ions. The sequence is that of Parvalbumin alpha from Callorhinchus milii (Ghost shark).